The chain runs to 700 residues: Elongation factor G (700 aa).

The region spanning 8-290 (DKYRNIGISA…AVVELLPSPL (283 aa)) is the tr-type G domain. GTP-binding positions include 17–24 (AHIDAGKT), 88–92 (DTPGH), and 142–145 (NKMD).

This sequence belongs to the TRAFAC class translation factor GTPase superfamily. Classic translation factor GTPase family. EF-G/EF-2 subfamily.

It is found in the cytoplasm. In terms of biological role, catalyzes the GTP-dependent ribosomal translocation step during translation elongation. During this step, the ribosome changes from the pre-translocational (PRE) to the post-translocational (POST) state as the newly formed A-site-bound peptidyl-tRNA and P-site-bound deacylated tRNA move to the P and E sites, respectively. Catalyzes the coordinated movement of the two tRNA molecules, the mRNA and conformational changes in the ribosome. This is Elongation factor G from Polynucleobacter necessarius subsp. necessarius (strain STIR1).